The primary structure comprises 342 residues: Flagellar P-ring protein (342 aa).

The signal sequence occupies residues 1–19 (MKRVFLWLIFVLAFHKLLA).

The protein belongs to the FlgI family. The basal body constitutes a major portion of the flagellar organelle and consists of four rings (L,P,S, and M) mounted on a central rod.

It is found in the periplasm. It localises to the bacterial flagellum basal body. Functionally, assembles around the rod to form the L-ring and probably protects the motor/basal body from shearing forces during rotation. This Helicobacter pylori (strain G27) protein is Flagellar P-ring protein.